A 78-amino-acid chain; its full sequence is Large ribosomal subunit protein bL28 (78 aa).

The interval 1–31 (MAAHCQVTGAEPGFGHSISHSHRRNKRRFDP) is disordered.

It belongs to the bacterial ribosomal protein bL28 family.

The protein is Large ribosomal subunit protein bL28 of Arthrobacter sp. (strain FB24).